The chain runs to 315 residues: Thioredoxin reductase (315 aa).

34-41 (EGQKVGGQ) lines the FAD pocket. Cysteine 134 and cysteine 137 form a disulfide bridge. Residue 282-291 (DIRVKSLRQV) participates in FAD binding.

It belongs to the class-II pyridine nucleotide-disulfide oxidoreductase family. Homodimer. The cofactor is FAD.

It is found in the cytoplasm. The enzyme catalyses [thioredoxin]-dithiol + NADP(+) = [thioredoxin]-disulfide + NADPH + H(+). This is Thioredoxin reductase (trxB) from Peptoclostridium acidaminophilum (Eubacterium acidaminophilum).